Consider the following 998-residue polypeptide: Bifunctional glutamine synthetase adenylyltransferase/adenylyl-removing enzyme (998 aa).

The adenylyl removase stretch occupies residues Met-1–Leu-487. The interval Gly-492–Ser-998 is adenylyl transferase.

It belongs to the GlnE family. Mg(2+) serves as cofactor.

The catalysed reaction is [glutamine synthetase]-O(4)-(5'-adenylyl)-L-tyrosine + phosphate = [glutamine synthetase]-L-tyrosine + ADP. It carries out the reaction [glutamine synthetase]-L-tyrosine + ATP = [glutamine synthetase]-O(4)-(5'-adenylyl)-L-tyrosine + diphosphate. In terms of biological role, involved in the regulation of glutamine synthetase GlnA, a key enzyme in the process to assimilate ammonia. When cellular nitrogen levels are high, the C-terminal adenylyl transferase (AT) inactivates GlnA by covalent transfer of an adenylyl group from ATP to specific tyrosine residue of GlnA, thus reducing its activity. Conversely, when nitrogen levels are low, the N-terminal adenylyl removase (AR) activates GlnA by removing the adenylyl group by phosphorolysis, increasing its activity. The regulatory region of GlnE binds the signal transduction protein PII (GlnB) which indicates the nitrogen status of the cell. This is Bifunctional glutamine synthetase adenylyltransferase/adenylyl-removing enzyme from Mycolicibacterium paratuberculosis (strain ATCC BAA-968 / K-10) (Mycobacterium paratuberculosis).